The chain runs to 1388 residues: Kinesin-like protein KIF15-A (1388 aa).

A Kinesin motor domain is found at 26–364 (AIKVFVRIRP…LQFAQRAKLI (339 aa)). ATP is bound at residue 110–117 (GQTGSGKT). A coiled-coil region spans residues 369–1383 (VVNEDTQGNV…ENLFLKESKK (1015 aa)). The segment at 1127 to 1156 (EQEKIRPASSNSSSPVVLPETPRTPEGNPY) is disordered. A necessary for its targeting to microtubule minus ends region spans residues 1139-1388 (SSPVVLPETP…KESKKCEHCN (250 aa)).

It belongs to the TRAFAC class myosin-kinesin ATPase superfamily. Kinesin family. KLP2 subfamily. As to quaternary structure, homodimer. Dimerization is required for targeting to microtubule minus ends. Found in a complex with tpx2 and microtubules. Its association with microtubules and targeting to microtubule minus ends requires tpx2. In terms of tissue distribution, strongly expressed in testis and weakly in lung (at protein level).

Its subcellular location is the cytoplasm. It is found in the cytoskeleton. The protein localises to the microtubule organizing center. The protein resides in the centrosome. It localises to the spindle. Its subcellular location is the spindle pole. Its function is as follows. Plus-end directed kinesin-like motor enzyme involved in mitotic spindle assembly. Required for centrosome separation and maintenance of spindle bipolarity during mitosis. The chain is Kinesin-like protein KIF15-A (kif15-a) from Xenopus laevis (African clawed frog).